A 630-amino-acid chain; its full sequence is Triacylglycerol lipase ptl2 (630 aa).

The region spanning 251 to 442 is the PNPLA domain; sequence LCLSGGASFA…RTDIPLSELR (192 aa). Positions 282-286 match the GXSXG motif; the sequence is GTSGG. The active-site Nucleophile is the Ser-284. Asp-429 acts as the Proton acceptor in catalysis.

It belongs to the PLPL family.

The protein resides in the lipid droplet. The catalysed reaction is a triacylglycerol + H2O = a diacylglycerol + a fatty acid + H(+). Lipid particle-localized triacylglycerol (TAG) lipase. The lipid droplet/particle is a lipid storage compartment which serves as a depot of energy and building blocks for membrane lipid biosynthesis. Involved in the mobilization of the non-polar storage lipids triacylglycerols (TAGs) from lipid particles by hydrolysis of TAGs, releasing and supplying specific fatty acids to the appropriate metabolic pathways. This chain is Triacylglycerol lipase ptl2 (ptl2), found in Schizosaccharomyces pombe (strain 972 / ATCC 24843) (Fission yeast).